The primary structure comprises 204 residues: High frequency lysogenization protein HflD homolog (204 aa).

The protein belongs to the HflD family.

It is found in the cytoplasm. It localises to the cell inner membrane. The sequence is that of High frequency lysogenization protein HflD homolog from Xylella fastidiosa (strain M23).